The primary structure comprises 209 residues: Probable phosphatase C1687.21 (209 aa).

The active-site Tele-phosphohistidine intermediate is the H8. The active-site Proton donor/acceptor is the E82.

The protein belongs to the phosphoglycerate mutase family. BPG-dependent PGAM subfamily.

The protein resides in the cytoplasm. Its subcellular location is the nucleus. The polypeptide is Probable phosphatase C1687.21 (Schizosaccharomyces pombe (strain 972 / ATCC 24843) (Fission yeast)).